We begin with the raw amino-acid sequence, 507 residues long: MQEKIIILDFGSQTTQLIGRRVRELDTYCEIVPYNKFPKEDPTIKGVILSGSPFSVYDKDAFKVDLSEIRGKYPILGICYGAQFMAYTNNGKVEPAGTREYGRAHLTSFCKDNVLFKGVRENTQVWMSHGDTITAIPDNFKKIASTDKVDIAAYQVEGEKVWGVQFHPEVFHSEDGTQILRNFVVDVCGCKQDWSPASFIESTVAELKAQLGDDKVVLGLSGGVDSSVAAVLLNRAIGKNLTCIFVDHGMLRKNEFKNVMNDYECLGLNVIGVDASEKFFAELAGVTEPERKRKIIGKGFIDVFDVEAHKIKDVKWLAQGTIYPDCIESLSITGTVIKSHHNVGGLPEKMHLKLCEPLRLLFKDEVRRVGRELGMPEHLITRHPFPGPGLAVRILGDITREKVRILQDADDIYIQGLRDWGLYDQVWQAGVILLPVQSVGVMGDERTYERAVALRAVTSTDAMTADWAHLPYEFLGKISNDIINKVKGVNRVTYDISSKPPATIEWE.

One can recognise a Glutamine amidotransferase type-1 domain in the interval 4–193; it reads KIIILDFGSQ…VVDVCGCKQD (190 aa). Cys-79 acts as the Nucleophile in catalysis. Residues His-167 and Glu-169 contribute to the active site. The GMPS ATP-PPase domain occupies 194-382; that stretch reads WSPASFIEST…LGMPEHLITR (189 aa). 221-227 is a binding site for ATP; sequence SGGVDSS.

Homodimer.

It carries out the reaction XMP + L-glutamine + ATP + H2O = GMP + L-glutamate + AMP + diphosphate + 2 H(+). The protein operates within purine metabolism; GMP biosynthesis; GMP from XMP (L-Gln route): step 1/1. Functionally, catalyzes the synthesis of GMP from XMP. The polypeptide is GMP synthase [glutamine-hydrolyzing] 1 (guaA1) (Bacteroides thetaiotaomicron (strain ATCC 29148 / DSM 2079 / JCM 5827 / CCUG 10774 / NCTC 10582 / VPI-5482 / E50)).